A 210-amino-acid chain; its full sequence is Probable high-affinity nitrate transporter-activating protein 2.2 (210 aa).

Positions 1–23 are cleaved as a signal peptide; sequence MARFGAVIHRVFLPLLLLLVVLG. The chain crosses the membrane as a helical span at residues 182–202; that stretch reads IEVAAGVLSAFSVAALAVFLV.

Belongs to the NAR2 family.

It is found in the cell membrane. In terms of biological role, involved in nitrate transport. This chain is Probable high-affinity nitrate transporter-activating protein 2.2 (NAR2.2), found in Oryza sativa subsp. japonica (Rice).